The sequence spans 212 residues: Protein G1-like7 (212 aa).

Positions 1-22 (MDPSGPGPSSAAAGGAPAVAAA) are enriched in low complexity. 2 disordered regions span residues 1–34 (MDPS…RYES) and 148–212 (KARG…PSAS). The 128-residue stretch at 31 to 158 (RYESQKRRDW…ARGIPYEKKK (128 aa)) folds into the ALOG domain. The short motif at 156–160 (KKKRK) is the Nuclear localization signal element. The span at 173-182 (SGSSSAAAAA) shows a compositional bias: low complexity. Over residues 183-194 (AGGGDTGSGGGA) the composition is skewed to gly residues.

Belongs to the plant homeotic and developmental regulators ALOG protein family.

The protein resides in the nucleus. Probable transcription regulator that acts as a developmental regulator by promoting cell growth in response to light. The sequence is that of Protein G1-like7 from Oryza sativa subsp. indica (Rice).